The primary structure comprises 684 residues: Actin-related protein 5 (684 aa).

Positions 262–469 (KEKSVIIQLP…ARQKQKQKAN (208 aa)) form a coiled coil. 2 disordered regions span residues 392-443 (KEKK…PEHY) and 481-500 (VNPT…EDPE). The segment covering 402–443 (SMKDGRLAQKRKRDEEKEKEKEKEEERDRQEEESFLKDPEHY) has biased composition (basic and acidic residues).

It belongs to the actin family. ARP5 subfamily. Component of the chromatin-remodeling Ino80 complex.

It is found in the nucleus. In terms of biological role, proposed core component of the chromatin remodeling Ino80 complex which is involved in transcriptional regulation, DNA replication and probably DNA repair. The protein is Actin-related protein 5 (arpE) of Dictyostelium discoideum (Social amoeba).